We begin with the raw amino-acid sequence, 213 residues long: Probable GH family 25 lysozyme 4 (213 aa).

An N-terminal signal peptide occupies residues 1 to 19 (MRLFLLLITFIALFGAINA). In terms of domain architecture, Ch-type lysozyme spans 21 to 213 (SGVDISQGSS…VGYDFNWYPN (193 aa)). Residues Asp24, Asp112, and Glu114 contribute to the active site.

Belongs to the glycosyl hydrolase 25 family.

Its subcellular location is the secreted. The enzyme catalyses Hydrolysis of (1-&gt;4)-beta-linkages between N-acetylmuramic acid and N-acetyl-D-glucosamine residues in a peptidoglycan and between N-acetyl-D-glucosamine residues in chitodextrins.. The chain is Probable GH family 25 lysozyme 4 from Dictyostelium discoideum (Social amoeba).